Consider the following 555-residue polypeptide: Energy-dependent translational throttle protein EttA (555 aa).

ABC transporter domains are found at residues 6-259 and 324-550; these read YTMH…AQEA and LEVS…RIKY. An ATP-binding site is contributed by 39 to 46; that stretch reads GLNGAGKS. Positions 95 to 139 are arm; sequence SEVVNALKRLDEVYALYADPDADFDKLAAEQGRLEEIIQAHDGHN. A ptIM region spans residues 242–322; that stretch reads GNYSSWLEQK…IPPGPRLGDK (81 aa). 356–363 is a binding site for ATP; sequence GPNGAGKS.

It belongs to the ABC transporter superfamily. ABCF family. Translational throttle EttA subfamily. As to quaternary structure, monomer. Probably contacts ribosomal proteins L1, L5, L33 and S7, the 16S and 23S rRNA and the P-site containing tRNA(fMet).

Its subcellular location is the cytoplasm. The enzyme catalyses ATP + H2O = ADP + phosphate + H(+). In terms of biological role, a translation factor that gates the progression of the 70S ribosomal initiation complex (IC, containing tRNA(fMet) in the P-site) into the translation elongation cycle by using a mechanism sensitive to the ATP/ADP ratio. Binds to the 70S ribosome E-site where it modulates the state of the translating ribosome during subunit translocation. ATP hydrolysis probably frees it from the ribosome, which can enter the elongation phase. The polypeptide is Energy-dependent translational throttle protein EttA (Escherichia coli O6:H1 (strain CFT073 / ATCC 700928 / UPEC)).